A 452-amino-acid chain; its full sequence is MSTTFPGLVHDAEIRHDGSNSYRLMQLGCLESVANSTVAYSSSSPLTYSTTGTEFASPYFSTNHQYTPLHHQSFHYEFQHSHPAVTPDAYSLNSLHHSQQYYQQIHHGEPTDFINLHNARALKSSCLDEQRRELGCLDAYRRHDLSLMSHGSQYGMHPDQRLLPGPSLGLAAAGADDLQGSVEAQCGIVLNGQGGVIRRGGTCVVNPTDLFCSVPGRLSLLSSTSKYKVTIAEVKRRLSPPECLNASLLGGILRRAKSKNGGRCLREKLDRLGLNLPAGRRKAANVTLLTSLVEGEALHLARDFGYTCETEFPAKAVGEHLARQHMEQKEQTARKKMILATKQICKEFQDLLSQDRSPLGSSRPTPILDLDIQRHLTHFSLITHGFGTPAICAALSTFQTVLSEMLNYLEKHTTHKNGGAADSGQGHANSEKAPLRKASEAAVKEGKTEKTD.

Ser-239 carries the phosphoserine; by PKA modification. An H-S-H (helix-span-helix), dimerization region spans residues 280 to 410 (RRKAANVTLL…VLSEMLNYLE (131 aa)). A disordered region spans residues 416-452 (KNGGAADSGQGHANSEKAPLRKASEAAVKEGKTEKTD). Over residues 429–452 (NSEKAPLRKASEAAVKEGKTEKTD) the composition is skewed to basic and acidic residues.

It belongs to the AP-2 family. Binds DNA as a dimer. Can form homodimers or heterodimers with other AP-2 family members. Expressed in both embryonic and newborn brain.

It localises to the nucleus. In terms of biological role, sequence-specific DNA-binding protein that interacts with inducible viral and cellular enhancer elements to regulate transcription of selected genes. AP-2 factors bind to the consensus sequence 5'-GCCNNNGGC-3' and activate genes involved in a large spectrum of important biological functions including proper eye, face, body wall, limb and neural tube development. They also suppress a number of genes including MCAM/MUC18, C/EBP alpha and MYC. This is Transcription factor AP-2-delta (Tfap2d) from Mus musculus (Mouse).